Reading from the N-terminus, the 260-residue chain is Global transcriptional regulator CodY (260 aa).

Positions 1–159 (MPNLLEKTRK…SSTVVGIQLL (159 aa)) are GAF domain. The segment at residues 207–226 (ASVIADRIGITRSVIVNALR) is a DNA-binding region (H-T-H motif).

It belongs to the CodY family.

It is found in the cytoplasm. DNA-binding global transcriptional regulator which is involved in the adaptive response to starvation and acts by directly or indirectly controlling the expression of numerous genes in response to nutrient availability. During rapid exponential growth, CodY is highly active and represses genes whose products allow adaptation to nutrient depletion. The chain is Global transcriptional regulator CodY from Streptococcus pyogenes serotype M1.